Reading from the N-terminus, the 240-residue chain is Tubulin alpha chain (240 aa).

Asn17 lines the GTP pocket. The active site involves Glu43.

Belongs to the tubulin family. Dimer of alpha and beta chains. A typical microtubule is a hollow water-filled tube with an outer diameter of 25 nm and an inner diameter of 15 nM. Alpha-beta heterodimers associate head-to-tail to form protofilaments running lengthwise along the microtubule wall with the beta-tubulin subunit facing the microtubule plus end conferring a structural polarity. Microtubules usually have 13 protofilaments but different protofilament numbers can be found in some organisms and specialized cells. It depends on Mg(2+) as a cofactor. Undergoes a tyrosination/detyrosination cycle, the cyclic removal and re-addition of a C-terminal tyrosine residue by the enzymes tubulin tyrosine carboxypeptidase (TTCP) and tubulin tyrosine ligase (TTL), respectively.

It localises to the cytoplasm. It is found in the cytoskeleton. It catalyses the reaction GTP + H2O = GDP + phosphate + H(+). Functionally, tubulin is the major constituent of microtubules, a cylinder consisting of laterally associated linear protofilaments composed of alpha- and beta-tubulin heterodimers. Microtubules grow by the addition of GTP-tubulin dimers to the microtubule end, where a stabilizing cap forms. Below the cap, tubulin dimers are in GDP-bound state, owing to GTPase activity of alpha-tubulin. The sequence is that of Tubulin alpha chain from Octopus vulgaris (Common octopus).